A 746-amino-acid chain; its full sequence is NAD(P)H-quinone oxidoreductase subunit 5, chloroplastic (746 aa).

Transmembrane regions (helical) follow at residues tryptophan 9–phenylalanine 29, tryptophan 40–isoleucine 60, isoleucine 89–isoleucine 109, phenylalanine 125–isoleucine 145, valine 147–threonine 167, glycine 185–phenylalanine 205, valine 221–serine 241, threonine 258–alanine 278, leucine 280–isoleucine 300, leucine 327–isoleucine 347, alanine 354–serine 374, threonine 396–serine 416, leucine 425–tyrosine 445, isoleucine 547–proline 567, phenylalanine 608–tyrosine 628, and tyrosine 723–phenylalanine 743.

The protein belongs to the complex I subunit 5 family. As to quaternary structure, NDH is composed of at least 16 different subunits, 5 of which are encoded in the nucleus.

It is found in the plastid. Its subcellular location is the chloroplast thylakoid membrane. The catalysed reaction is a plastoquinone + NADH + (n+1) H(+)(in) = a plastoquinol + NAD(+) + n H(+)(out). The enzyme catalyses a plastoquinone + NADPH + (n+1) H(+)(in) = a plastoquinol + NADP(+) + n H(+)(out). NDH shuttles electrons from NAD(P)H:plastoquinone, via FMN and iron-sulfur (Fe-S) centers, to quinones in the photosynthetic chain and possibly in a chloroplast respiratory chain. The immediate electron acceptor for the enzyme in this species is believed to be plastoquinone. Couples the redox reaction to proton translocation, and thus conserves the redox energy in a proton gradient. This Arabidopsis thaliana (Mouse-ear cress) protein is NAD(P)H-quinone oxidoreductase subunit 5, chloroplastic (ndhF).